Reading from the N-terminus, the 239-residue chain is tRNA (guanine-N(1)-)-methyltransferase (239 aa).

S-adenosyl-L-methionine is bound by residues glycine 109 and 128-133 (IGDYVL).

It belongs to the RNA methyltransferase TrmD family. Homodimer.

The protein resides in the cytoplasm. It catalyses the reaction guanosine(37) in tRNA + S-adenosyl-L-methionine = N(1)-methylguanosine(37) in tRNA + S-adenosyl-L-homocysteine + H(+). Functionally, specifically methylates guanosine-37 in various tRNAs. This is tRNA (guanine-N(1)-)-methyltransferase from Thermus thermophilus (strain ATCC BAA-163 / DSM 7039 / HB27).